Consider the following 325-residue polypeptide: Apoptosis-enhancing nuclease (325 aa).

The short motif at 27–35 (RKRHKRRSR) is the Nucleolar localization signal element. The disordered stretch occupies residues 85–105 (RAGSGSAPCSRRPAPGKASGP). Positions 110 to 266 (CVAIDCEMVG…EDATTAMELY (157 aa)) constitute an Exonuclease domain. The Nuclear localization signal signature appears at 165 to 188 (RQHMRKAVPFQVAQKEILKLLKGK). Positions 281-325 (LWTCPEDREPDSSTDMEQYMEDQYWPDDLAHGSRGGAREAQDRRN) are disordered. Residues 308 to 325 (DLAHGSRGGAREAQDRRN) are compositionally biased toward basic and acidic residues.

The protein resides in the nucleus. Its subcellular location is the nucleolus. Functionally, exonuclease with activity against single- and double-stranded DNA and RNA. Mediates p53-induced apoptosis. When induced by p53 following DNA damage, digests double-stranded DNA to form single-stranded DNA and amplifies DNA damage signals, leading to enhancement of apoptosis. The polypeptide is Apoptosis-enhancing nuclease (AEN) (Homo sapiens (Human)).